Reading from the N-terminus, the 282-residue chain is RsbT co-antagonist protein RsbRC (282 aa).

Phosphoserine occurs at positions 165 and 174. One can recognise an STAS domain in the interval 165-276 (SAPVIVLFHS…STLASAIASD (112 aa)). Phosphothreonine is present on Thr186.

Probably present in the stressosome with RsbRA, RsbRB, RsbRD and RsbS. In terms of processing, phosphorylated by RsbT.

Functionally, one of 4 functionally non-identical RsbR paralogs, it functions in the environmental signaling branch of the general stress response. In terms of biological role, negative regulator of sigma-B activity. Non-phosphorylated RsbS binds to RsbT, preventing its association with RsbU. Requires any one of RsbRA, RsbRB, RsbRC or RsbRD to sequester RsbT. When RsbS and the RsbR paralog(s) are phosphorylated, they release RsbT, which can then bind and activate RsbU. The chain is RsbT co-antagonist protein RsbRC (rsbRC) from Bacillus subtilis (strain 168).